The chain runs to 423 residues: Serine hydroxymethyltransferase (423 aa).

(6S)-5,6,7,8-tetrahydrofolate is bound by residues L120 and 124 to 126 (GHL). Position 229 is an N6-(pyridoxal phosphate)lysine (K229). Residues E245 and 353 to 355 (SPF) each bind (6S)-5,6,7,8-tetrahydrofolate.

Belongs to the SHMT family. As to quaternary structure, homodimer. Pyridoxal 5'-phosphate serves as cofactor.

The protein resides in the cytoplasm. The enzyme catalyses (6R)-5,10-methylene-5,6,7,8-tetrahydrofolate + glycine + H2O = (6S)-5,6,7,8-tetrahydrofolate + L-serine. The protein operates within one-carbon metabolism; tetrahydrofolate interconversion. It participates in amino-acid biosynthesis; glycine biosynthesis; glycine from L-serine: step 1/1. Catalyzes the reversible interconversion of serine and glycine with tetrahydrofolate (THF) serving as the one-carbon carrier. This reaction serves as the major source of one-carbon groups required for the biosynthesis of purines, thymidylate, methionine, and other important biomolecules. Also exhibits THF-independent aldolase activity toward beta-hydroxyamino acids, producing glycine and aldehydes, via a retro-aldol mechanism. The polypeptide is Serine hydroxymethyltransferase (Prochlorococcus marinus (strain MIT 9312)).